Consider the following 499-residue polypeptide: Chaperone SurA (499 aa).

Residues 1 to 36 form the signal peptide; that stretch reads MKRQEFALFSLTLMLSPWRRVLLPAVLAAMAGPALA. PpiC domains follow at residues 231–333 and 352–450; these read PTEF…KLTA and ITQT…QVEN.

It is found in the periplasm. The enzyme catalyses [protein]-peptidylproline (omega=180) = [protein]-peptidylproline (omega=0). In terms of biological role, chaperone involved in the correct folding and assembly of outer membrane proteins. Recognizes specific patterns of aromatic residues and the orientation of their side chains, which are found more frequently in integral outer membrane proteins. May act in both early periplasmic and late outer membrane-associated steps of protein maturation. The protein is Chaperone SurA of Cupriavidus pinatubonensis (strain JMP 134 / LMG 1197) (Cupriavidus necator (strain JMP 134)).